Reading from the N-terminus, the 701-residue chain is Larval serum protein 2 (701 aa).

The N-terminal stretch at 1 to 21 is a signal peptide; that stretch reads MKSFTVIALAAVALLATLGQA. Residue Asn204 is glycosylated (N-linked (GlcNAc...) asparagine).

This sequence belongs to the hemocyanin family. Homohexamer.

Its subcellular location is the secreted. It is found in the extracellular space. Functionally, larval storage protein (LSP) which may serve as a store of amino acids for synthesis of adult proteins. The polypeptide is Larval serum protein 2 (Lsp2) (Drosophila melanogaster (Fruit fly)).